A 125-amino-acid chain; its full sequence is MKGCSLDLHLSPMASTLQSCHQDSTVNDRSSTIRSKEINAFYSGRLSEYDLVEIQMRAIIEMASKDREVTALELVPVRLESPLGCSVKRSVKRFLEKRKKRSKSFTLTPNYTSSTSSSSSSLHNF.

The EAR motif lies at 6–10 (LDLHL). The tract at residues 99–125 (KKRSKSFTLTPNYTSSTSSSSSSLHNF) is disordered. The segment covering 112 to 125 (TSSTSSSSSSLHNF) has biased composition (low complexity).

As to quaternary structure, monomer. Lack of homodimerization, and very weak or no interaction with AFPH2/NINJA and other JAZ proteins. Interacts (via EAR motif) with TPL. Interacts (via jas motif) with MYC2. Post-translationally, phosphorylated at multiple serine residues.

Its function is as follows. Non-TIFY functional repressor of jasmonate (JA)-mediated growth and defense responses. Intrinsically resistant to JA-induced turnover, probably due to the absence of the canonical degron that strongly interacts with COI1 in the presence of JA-Ile in the TIFY/JAZ proteins. The chain is Protein JAZ13 from Arabidopsis thaliana (Mouse-ear cress).